A 127-amino-acid chain; its full sequence is Small ribosomal subunit protein bS6 (127 aa).

A disordered region spans residues Val96–Ala127. Residues Asp117–Ala127 show a composition bias toward basic and acidic residues.

The protein belongs to the bacterial ribosomal protein bS6 family.

Functionally, binds together with bS18 to 16S ribosomal RNA. The sequence is that of Small ribosomal subunit protein bS6 from Azoarcus sp. (strain BH72).